The primary structure comprises 224 residues: UPF0758 protein Maqu_3564 (224 aa).

Residues 102-224 form the MPN domain; that stretch reads PLRSPADTRR…VISLAERGLM (123 aa). The Zn(2+) site is built by histidine 173, histidine 175, and aspartate 186. Residues 173 to 186 carry the JAMM motif motif; sequence HNHPSGVAEPSQAD.

Belongs to the UPF0758 family.

In Marinobacter nauticus (strain ATCC 700491 / DSM 11845 / VT8) (Marinobacter aquaeolei), this protein is UPF0758 protein Maqu_3564.